Consider the following 202-residue polypeptide: Superoxide dismutase [Cu-Zn], chloroplastic (202 aa).

Residues Met-1–Ala-48 constitute a chloroplast transit peptide. Residues His-94, His-96, and His-111 each contribute to the Cu cation site. Cys-105 and Cys-194 form a disulfide bridge. Positions 111, 119, 128, and 131 each coordinate Zn(2+). His-168 contacts Cu cation.

It belongs to the Cu-Zn superoxide dismutase family. In terms of assembly, homotetramer. The cofactor is Cu cation. Requires Zn(2+) as cofactor.

The protein resides in the plastid. The protein localises to the chloroplast. It catalyses the reaction 2 superoxide + 2 H(+) = H2O2 + O2. Its function is as follows. Destroys radicals which are normally produced within the cells and which are toxic to biological systems. This is Superoxide dismutase [Cu-Zn], chloroplastic (SODCP) from Pisum sativum (Garden pea).